Here is a 334-residue protein sequence, read N- to C-terminus: Methylthioribose-1-phosphate isomerase (334 aa).

Substrate-binding positions include Arg-44–Ala-46, Arg-87, and Gln-192. Asp-233 serves as the catalytic Proton donor. Asn-243 to Lys-244 is a binding site for substrate.

The protein belongs to the eIF-2B alpha/beta/delta subunits family. MtnA subfamily.

It catalyses the reaction 5-(methylsulfanyl)-alpha-D-ribose 1-phosphate = 5-(methylsulfanyl)-D-ribulose 1-phosphate. The protein operates within amino-acid biosynthesis; L-methionine biosynthesis via salvage pathway; L-methionine from S-methyl-5-thio-alpha-D-ribose 1-phosphate: step 1/6. Catalyzes the interconversion of methylthioribose-1-phosphate (MTR-1-P) into methylthioribulose-1-phosphate (MTRu-1-P). This chain is Methylthioribose-1-phosphate isomerase, found in Dehalococcoides mccartyi (strain ATCC BAA-2266 / KCTC 15142 / 195) (Dehalococcoides ethenogenes (strain 195)).